Reading from the N-terminus, the 377-residue chain is Ribosomal RNA large subunit methyltransferase G (377 aa).

Belongs to the methyltransferase superfamily. RlmG family.

It is found in the cytoplasm. It carries out the reaction guanosine(1835) in 23S rRNA + S-adenosyl-L-methionine = N(2)-methylguanosine(1835) in 23S rRNA + S-adenosyl-L-homocysteine + H(+). Functionally, specifically methylates the guanine in position 1835 (m2G1835) of 23S rRNA. This chain is Ribosomal RNA large subunit methyltransferase G, found in Shewanella oneidensis (strain ATCC 700550 / JCM 31522 / CIP 106686 / LMG 19005 / NCIMB 14063 / MR-1).